The chain runs to 117 residues: Hainantoxin-XV-3 (117 aa).

Residues 1-20 form the signal peptide; that stretch reads MKLCAVIIASLLVCVAVASS. Positions 20 to 55 are disordered; the sequence is SSDNQKEFAQEKEMTREETQSLGEHEKDDEVTGSEE. The propeptide occupies 21–56; it reads SDNQKEFAQEKEMTREETQSLGEHEKDDEVTGSEER. The span at 23 to 55 shows a compositional bias: basic and acidic residues; that stretch reads NQKEFAQEKEMTREETQSLGEHEKDDEVTGSEE. Intrachain disulfides connect Cys-58–Cys-72, Cys-65–Cys-78, Cys-69–Cys-115, and Cys-71–Cys-91.

This sequence belongs to the neurotoxin 03 (Tx2) family. 02 subfamily. HNTX-XV sub-subfamily. Expressed by the venom gland.

It is found in the secreted. In terms of biological role, putative ion channel inhibitor. The sequence is that of Hainantoxin-XV-3 from Cyriopagopus hainanus (Chinese bird spider).